The chain runs to 201 residues: 3-isopropylmalate dehydratase small subunit (201 aa).

The protein belongs to the LeuD family. LeuD type 1 subfamily. Heterodimer of LeuC and LeuD.

The catalysed reaction is (2R,3S)-3-isopropylmalate = (2S)-2-isopropylmalate. Its pathway is amino-acid biosynthesis; L-leucine biosynthesis; L-leucine from 3-methyl-2-oxobutanoate: step 2/4. Its function is as follows. Catalyzes the isomerization between 2-isopropylmalate and 3-isopropylmalate, via the formation of 2-isopropylmaleate. The polypeptide is 3-isopropylmalate dehydratase small subunit (Salmonella schwarzengrund (strain CVM19633)).